A 607-amino-acid polypeptide reads, in one-letter code: MTESDRHDTPKGDRRISEGAGASPDESNPTDFAPEEFTPAYTPPLARSGTERPSFGRPAADNKELQERVDNLTARNAKLLDTLKDARQQLVALREEVDRLGQPPSGYGVLLEVQPDATVDVFTSGRKMRLTCSPNIDTETLHKGQTLRLNEALTIVEACEFDTVGEISTLREVLGDGKRALVVGHADEERVVHLAEPLLGEVDGEDGKRRRLRPGDSLLIDTKAGFAFERVPKAEVEDLVLEEVPDVGYEDIGGLGRQIEQIRDAVELPFLHKDLFRDYALRPPKGVLLYGPPGCGKTLIAKAVANSLAKKIAQARGDDAKEAKSYFLNIKGPELLNKFVGETERHIRLIFQRAREKASEGTPVIVFFDEMDSIFRTRGSGVSSDVETTVVPQLLSEIDGVEGLENVIVIGASNREDMIDPAILRPGRLDVKIKIERPDAEAAMDIFSKYLVETLPVHADDLNEFGGDRTACINAMIERVVERMYAESDDNRFLEVTYANGDKEIMYFKDFNSGAMIQNVVDRSKKYAIKSQLETGAPGLRVQHLFDSILDEFAENEDLPNTTNPDDWARISGKKGERIVYIRTLVTGKSSGASRAIDTETNTGQYL.

Over residues 1–17 (MTESDRHDTPKGDRRIS) the composition is skewed to basic and acidic residues. The segment at 1–65 (MTESDRHDTP…GRPAADNKEL (65 aa)) is disordered. The stretch at 59 to 102 (AADNKELQERVDNLTARNAKLLDTLKDARQQLVALREEVDRLGQ) forms a coiled coil. 294 to 299 (GCGKTL) contributes to the ATP binding site. Residues 606-607 (YL) are docks into pockets in the proteasome alpha-ring.

The protein belongs to the AAA ATPase family. Homohexamer. Assembles into a hexameric ring structure that caps the 20S proteasome core. Strongly interacts with the prokaryotic ubiquitin-like protein Pup through a hydrophobic interface; the interacting region of ARC lies in its N-terminal coiled-coil domain. There is one Pup binding site per ARC hexamer ring. Upon ATP-binding, the C-terminus of ARC interacts with the alpha-rings of the proteasome core, possibly by binding to the intersubunit pockets.

It participates in protein degradation; proteasomal Pup-dependent pathway. ATPase which is responsible for recognizing, binding, unfolding and translocation of pupylated proteins into the bacterial 20S proteasome core particle. May be essential for opening the gate of the 20S proteasome via an interaction with its C-terminus, thereby allowing substrate entry and access to the site of proteolysis. Thus, the C-termini of the proteasomal ATPase may function like a 'key in a lock' to induce gate opening and therefore regulate proteolysis. This Gordonia bronchialis (strain ATCC 25592 / DSM 43247 / BCRC 13721 / JCM 3198 / KCTC 3076 / NBRC 16047 / NCTC 10667) (Rhodococcus bronchialis) protein is Proteasome-associated ATPase.